A 760-amino-acid chain; its full sequence is DEAD-box ATP-dependent RNA helicase 24 (760 aa).

Disordered regions lie at residues 1–76 and 90–113; these read MSNR…GEVD and QEMK…DDDD. Over residues 14–27 the composition is skewed to polar residues; sequence NRQTSYSFERSQAP. The span at 41–64 shows a compositional bias: acidic residues; the sequence is NSEDADLDNIDYMENEEAEEDIEE. Residues 99–109 are compositionally biased toward basic and acidic residues; it reads KPKEKLERYKD. Phosphoserine is present on Ser160. The Q motif signature appears at 228 to 256; sequence KTFEDCGFSSQIMSAIKKQAYEKPTAIQC. A Helicase ATP-binding domain is found at 259–434; the sequence is LPIVLSGRDV…REILSDPIRV (176 aa). 272–279 serves as a coordination point for ATP; the sequence is AKTGSGKT. The DEAD box signature appears at 382-385; that stretch reads DEAD. In terms of domain architecture, Helicase C-terminal spans 459-608; that stretch reads KLPWLLEKLP…NVPPELTDLA (150 aa). Disordered stretches follow at residues 604–638, 647–666, and 706–760; these read LTDL…KGVR, GFSS…SRSG, and FVSG…GWDN. A compositionally biased stretch (basic residues) spans 615-628; that stretch reads KSKRDGRKGGKKGR. The span at 629 to 638 shows a compositional bias: gly residues; sequence GGGGGNKGVR. The span at 649-666 shows a compositional bias: polar residues; it reads SSESSRTPSSKAAPSRSG. Gly residues predominate over residues 707–716; the sequence is VSGGTIGGDM. Residues 718–732 are compositionally biased toward polar residues; that stretch reads RTQSQAPPVAPTQNA. The span at 733 to 745 shows a compositional bias: low complexity; it reads SSHNSSQNHSQSS. The segment covering 750 to 760 has biased composition (basic residues); it reads RERKRRSGWDN.

Belongs to the DEAD box helicase family.

The catalysed reaction is ATP + H2O = ADP + phosphate + H(+). This chain is DEAD-box ATP-dependent RNA helicase 24 (RH24), found in Arabidopsis thaliana (Mouse-ear cress).